The chain runs to 788 residues: Endonuclease MutS2 (788 aa).

334–341 (GPNTGGKT) contributes to the ATP binding site. The region spanning 713–788 (LDLRGQRYEE…GTGATIVYLQ (76 aa)) is the Smr domain.

Belongs to the DNA mismatch repair MutS family. MutS2 subfamily. As to quaternary structure, homodimer. Binds to stalled ribosomes, contacting rRNA.

Endonuclease that is involved in the suppression of homologous recombination and thus may have a key role in the control of bacterial genetic diversity. In terms of biological role, acts as a ribosome collision sensor, splitting the ribosome into its 2 subunits. Detects stalled/collided 70S ribosomes which it binds and splits by an ATP-hydrolysis driven conformational change. Acts upstream of the ribosome quality control system (RQC), a ribosome-associated complex that mediates the extraction of incompletely synthesized nascent chains from stalled ribosomes and their subsequent degradation. Probably generates substrates for RQC. The protein is Endonuclease MutS2 of Lactobacillus johnsonii (strain CNCM I-12250 / La1 / NCC 533).